We begin with the raw amino-acid sequence, 177 residues long: Large ribosomal subunit protein uL6 (177 aa).

Belongs to the universal ribosomal protein uL6 family. Part of the 50S ribosomal subunit.

Its function is as follows. This protein binds to the 23S rRNA, and is important in its secondary structure. It is located near the subunit interface in the base of the L7/L12 stalk, and near the tRNA binding site of the peptidyltransferase center. This Rhizobium johnstonii (strain DSM 114642 / LMG 32736 / 3841) (Rhizobium leguminosarum bv. viciae) protein is Large ribosomal subunit protein uL6.